Reading from the N-terminus, the 61-residue chain is Rubredoxin 3 (61 aa).

The region spanning 1–53 (MSSYRCPVCEYVYDESKGAPREGFPAGTPWDAVPDDWCCPDCGVREKLDFEPM) is the Rubredoxin-like domain. Fe cation-binding residues include Cys6, Cys9, Cys39, and Cys42.

It belongs to the rubredoxin family. It depends on Fe(3+) as a cofactor.

Its function is as follows. Involved in the hydrocarbon hydroxylating system, which transfers electrons from NADH to rubredoxin reductase and then through rubredoxin to alkane 1 monooxygenase. The sequence is that of Rubredoxin 3 (rubA3) from Rhodococcus erythropolis (Arthrobacter picolinophilus).